Consider the following 393-residue polypeptide: Na(+)/H(+) antiporter NhaA 1 (393 aa).

11 helical membrane-spanning segments follow: residues 23 to 43 (AGGV…NSPF), 58 to 78 (LSLT…LVGL), 96 to 116 (MLPG…FTAF), 126 to 146 (GWAV…SLLG), 155 to 175 (VFLA…IAIF), 178 to 198 (AEIS…LFVM), 224 to 244 (GVHA…KAAP), 265 to 285 (VAFI…FAGL), 298 to 318 (IMLG…WLAI), 334 to 354 (LYGV…IGLL), and 367 to 387 (IGVL…LRLV).

Belongs to the NhaA Na(+)/H(+) (TC 2.A.33) antiporter family.

The protein localises to the cell inner membrane. It carries out the reaction Na(+)(in) + 2 H(+)(out) = Na(+)(out) + 2 H(+)(in). Functionally, na(+)/H(+) antiporter that extrudes sodium in exchange for external protons. The polypeptide is Na(+)/H(+) antiporter NhaA 1 (Brucella anthropi (strain ATCC 49188 / DSM 6882 / CCUG 24695 / JCM 21032 / LMG 3331 / NBRC 15819 / NCTC 12168 / Alc 37) (Ochrobactrum anthropi)).